A 278-amino-acid polypeptide reads, in one-letter code: Ethanolamine utilization protein EutJ (278 aa).

The protein belongs to the EutJ family.

The protein operates within amine and polyamine degradation; ethanolamine degradation. Its function is as follows. May protect ethanolamine ammonia-lyase (EAL, eutB-eutC) from inhibition, may function in assembling the bacterial microcompartment and/or in refolding EAL, suggesting it may have chaperone activity. This is Ethanolamine utilization protein EutJ (eutJ) from Escherichia coli (strain K12).